A 354-amino-acid chain; its full sequence is MLWVDKYRPKSLDKVIVHEDIAQKLKKLVSEQDCPHLLFYGPSGSGKKTLIMALLKQIYGASAEKVKVENRAWKVDAGSRTIDLELTTLSSTNHVELTPSDAGFQDRYIVQEIIKEMAKNRPIDTKGKKGYKVLVLNEVDKLSREAQHSLRRTMEKYSSSCRLILCCNSSSKVTEAIKSRCLNVRINAPSQEEIVKVLEFVAKKESLQLPQGFAARIAEKSNRSLRRAILSLETCRVQNYPFTGNQVISPMDWEEYVAEIATDMMKEQSPKKLFQVRGKVYELLVNCIPPEVILKRLLHELLKKLDSELKLEVCHWAAYYEHRMRLGQKAIFHIEAFVAKFMSIYKNFLISTFG.

41-48 (GPSGSGKK) is a binding site for ATP.

The protein belongs to the activator 1 small subunits family. Heterotetramer of subunits RFC2, RFC3, RFC4 and RFC5 that can form a complex with RFC1.

The protein localises to the nucleus. In terms of biological role, may be involved in DNA replication and thus regulate cell proliferation. The polypeptide is Replication factor C subunit 3 (RFC3) (Arabidopsis thaliana (Mouse-ear cress)).